Consider the following 876-residue polypeptide: Alanine--tRNA ligase (876 aa).

Zn(2+) contacts are provided by H564, H568, C666, and H670.

It belongs to the class-II aminoacyl-tRNA synthetase family. Zn(2+) serves as cofactor.

Its subcellular location is the cytoplasm. It catalyses the reaction tRNA(Ala) + L-alanine + ATP = L-alanyl-tRNA(Ala) + AMP + diphosphate. Catalyzes the attachment of alanine to tRNA(Ala) in a two-step reaction: alanine is first activated by ATP to form Ala-AMP and then transferred to the acceptor end of tRNA(Ala). Also edits incorrectly charged Ser-tRNA(Ala) and Gly-tRNA(Ala) via its editing domain. The protein is Alanine--tRNA ligase of Porphyromonas gingivalis (strain ATCC BAA-308 / W83).